Consider the following 536-residue polypeptide: Probable pectinesterase/pectinesterase inhibitor 59 (536 aa).

Positions 1–30 (MNMMMQKLSILFLHLILLVLLCVHPLTTVA) are cleaved as a signal peptide. The interval 31–183 (DRNSTDWCDK…SHLISNCLAV (153 aa)) is pectinesterase inhibitor 59. N33, N91, N116, N159, and N195 each carry an N-linked (GlcNAc...) asparagine glycan. A pectinesterase 59 region spans residues 221 to 522 (NLVVAKDGSG…FTVGKFIAGT (302 aa)). 2 residues coordinate substrate: T298 and Q328. Residue D351 is the Proton donor; for pectinesterase activity of the active site. C365 and C385 form a disulfide bridge. D372 serves as the catalytic Nucleophile; for pectinesterase activity. Residues R440 and W442 each contribute to the substrate site.

This sequence in the N-terminal section; belongs to the PMEI family. In the C-terminal section; belongs to the pectinesterase family. Expressed in siliques.

Its subcellular location is the secreted. It localises to the cell wall. The enzyme catalyses [(1-&gt;4)-alpha-D-galacturonosyl methyl ester](n) + n H2O = [(1-&gt;4)-alpha-D-galacturonosyl](n) + n methanol + n H(+). It functions in the pathway glycan metabolism; pectin degradation; 2-dehydro-3-deoxy-D-gluconate from pectin: step 1/5. In terms of biological role, acts in the modification of cell walls via demethylesterification of cell wall pectin. The sequence is that of Probable pectinesterase/pectinesterase inhibitor 59 (PME59) from Arabidopsis thaliana (Mouse-ear cress).